A 37-amino-acid chain; its full sequence is Large ribosomal subunit protein bL36 (37 aa).

This sequence belongs to the bacterial ribosomal protein bL36 family.

The chain is Large ribosomal subunit protein bL36 from Prochlorococcus marinus (strain MIT 9313).